The chain runs to 160 residues: Nutritionally-regulated adipose and cardiac enriched protein homolog (160 aa).

A disordered region spans residues 1–69 (MRTAAGAVSP…AKPQRTSRRV (69 aa)). Composition is skewed to basic and acidic residues over residues 12–25 (SRPE…KNEE) and 33–42 (CRAEREDNRK). The helical transmembrane segment at 101 to 121 (GGSLLLQLCVCVLLVLALGLY) threads the bilayer.

It localises to the cell membrane. This chain is Nutritionally-regulated adipose and cardiac enriched protein homolog (NRAC), found in Homo sapiens (Human).